A 498-amino-acid polypeptide reads, in one-letter code: Cysteine--tRNA ligase (498 aa).

Residue C44 participates in Zn(2+) binding. Positions 46-56 (PTVYSDAHLGH) match the 'HIGH' region motif. 3 residues coordinate Zn(2+): C235, H260, and E264. The 'KMSKS' region motif lies at 291–295 (KMSKS). K294 contacts ATP.

This sequence belongs to the class-I aminoacyl-tRNA synthetase family. In terms of assembly, monomer. Requires Zn(2+) as cofactor.

It is found in the cytoplasm. It catalyses the reaction tRNA(Cys) + L-cysteine + ATP = L-cysteinyl-tRNA(Cys) + AMP + diphosphate. This is Cysteine--tRNA ligase (cysS) from Deinococcus radiodurans (strain ATCC 13939 / DSM 20539 / JCM 16871 / CCUG 27074 / LMG 4051 / NBRC 15346 / NCIMB 9279 / VKM B-1422 / R1).